The primary structure comprises 264 residues: 3-methyl-2-oxobutanoate hydroxymethyltransferase (264 aa).

Mg(2+) contacts are provided by Asp45 and Asp84. Residues 45-46 (DS), Asp84, and Lys112 each bind 3-methyl-2-oxobutanoate. Residue Glu114 participates in Mg(2+) binding. Catalysis depends on Glu181, which acts as the Proton acceptor.

This sequence belongs to the PanB family. Homodecamer; pentamer of dimers. The cofactor is Mg(2+).

The protein localises to the cytoplasm. It carries out the reaction 3-methyl-2-oxobutanoate + (6R)-5,10-methylene-5,6,7,8-tetrahydrofolate + H2O = 2-dehydropantoate + (6S)-5,6,7,8-tetrahydrofolate. It participates in cofactor biosynthesis; (R)-pantothenate biosynthesis; (R)-pantoate from 3-methyl-2-oxobutanoate: step 1/2. In terms of biological role, catalyzes the reversible reaction in which hydroxymethyl group from 5,10-methylenetetrahydrofolate is transferred onto alpha-ketoisovalerate to form ketopantoate. The polypeptide is 3-methyl-2-oxobutanoate hydroxymethyltransferase (Cronobacter sakazakii (strain ATCC BAA-894) (Enterobacter sakazakii)).